A 234-amino-acid polypeptide reads, in one-letter code: Mannose/glucose-specific lectin Cramoll (234 aa).

Residues glutamate 8 and aspartate 10 each contribute to the Mn(2+) site. 4 residues coordinate Ca(2+): aspartate 10, tyrosine 12, asparagine 14, and aspartate 19. An a carbohydrate-binding site is contributed by tyrosine 12. The Mn(2+) site is built by aspartate 19, histidine 24, and serine 34. Position 99–100 (99–100 (LY)) interacts with a carbohydrate. Aspartate 205 contributes to the Ca(2+) binding site. An a carbohydrate-binding site is contributed by arginine 225.

The protein belongs to the leguminous lectin family. Homotetramer. The alpha and beta chains are produced by partial proteolytic processing of the lectin precursor by an asparaginyl endopeptidase.

Functionally, glucose/D-mannose specific lectin. The polypeptide is Mannose/glucose-specific lectin Cramoll (Cratylia mollis (Camaratu bean)).